The sequence spans 181 residues: Oligoribonuclease (181 aa).

An Exonuclease domain is found at 8–171; sequence LIWIDLEMTG…DDIRESVAEL (164 aa). Tyrosine 129 is an active-site residue.

The protein belongs to the oligoribonuclease family.

It is found in the cytoplasm. Its function is as follows. 3'-to-5' exoribonuclease specific for small oligoribonucleotides. This Shigella flexneri protein is Oligoribonuclease.